We begin with the raw amino-acid sequence, 157 residues long: Nascent polypeptide-associated complex subunit beta (157 aa).

The segment at M1–K31 is disordered. The NAC-A/B domain maps to E33–I98. The tract at residues N125 to E157 is disordered. A compositionally biased stretch (low complexity) spans G130–E139.

The protein belongs to the NAC-beta family. In terms of assembly, part of the nascent polypeptide-associated complex (NAC), consisting of EGD2 and EGD1. NAC associates with ribosomes via EGD1.

The protein resides in the cytoplasm. Its subcellular location is the nucleus. Its function is as follows. Component of the nascent polypeptide-associated complex (NAC), a dynamic component of the ribosomal exit tunnel, protecting the emerging polypeptides from interaction with other cytoplasmic proteins to ensure appropriate nascent protein targeting. The NAC complex also promotes mitochondrial protein import by enhancing productive ribosome interactions with the outer mitochondrial membrane and blocks the inappropriate interaction of ribosomes translating non-secretory nascent polypeptides with translocation sites in the membrane of the endoplasmic reticulum. EGD1 may act as a transcription factor that exert a negative effect on the expression of several genes that are transcribed by RNA polymerase II. This Lodderomyces elongisporus (strain ATCC 11503 / CBS 2605 / JCM 1781 / NBRC 1676 / NRRL YB-4239) (Yeast) protein is Nascent polypeptide-associated complex subunit beta (EGD1).